Consider the following 306-residue polypeptide: Pantothenate kinase (306 aa).

Position 91 to 98 (91 to 98 (GSVAVGKS)) interacts with ATP.

It belongs to the prokaryotic pantothenate kinase family.

The protein resides in the cytoplasm. It catalyses the reaction (R)-pantothenate + ATP = (R)-4'-phosphopantothenate + ADP + H(+). It functions in the pathway cofactor biosynthesis; coenzyme A biosynthesis; CoA from (R)-pantothenate: step 1/5. The polypeptide is Pantothenate kinase (Streptococcus pneumoniae (strain 70585)).